The chain runs to 64 residues: Alternative prion protein (64 aa).

The tract at residues Met1–Ser22 is disordered. Residues Thr11–Ser22 show a composition bias toward polar residues. The chain crosses the membrane as a helical span at residues Trp40–Trp58.

The protein localises to the mitochondrion outer membrane. The chain is Alternative prion protein from Ovis aries (Sheep).